A 154-amino-acid chain; its full sequence is Low molecular weight protein-tyrosine-phosphatase PtpA (154 aa).

Cys8 serves as the catalytic Nucleophile. Arg14 is an active-site residue. Asp120 serves as the catalytic Proton donor.

This sequence belongs to the low molecular weight phosphotyrosine protein phosphatase family. Interacts with host CORO1A. Phosphorylations at Tyr-122 and Tyr-123 are essential for phosphatase activity.

The protein resides in the secreted. It catalyses the reaction O-phospho-L-tyrosyl-[protein] + H2O = L-tyrosyl-[protein] + phosphate. Its function is as follows. Secreted tyrosine phosphatase that plays a critical role during infection as a bacterial effector protein that counteracts host defenses. Required for intramacrophage survival. The chain is Low molecular weight protein-tyrosine-phosphatase PtpA (ptpA) from Staphylococcus aureus (strain MSSA476).